A 73-amino-acid polypeptide reads, in one-letter code: DNA-directed RNA polymerase subunit omega (73 aa).

This sequence belongs to the RNA polymerase subunit omega family. In terms of assembly, the RNAP catalytic core consists of 2 alpha, 1 beta, 1 beta' and 1 omega subunit. When a sigma factor is associated with the core the holoenzyme is formed, which can initiate transcription.

It catalyses the reaction RNA(n) + a ribonucleoside 5'-triphosphate = RNA(n+1) + diphosphate. Functionally, promotes RNA polymerase assembly. Latches the N- and C-terminal regions of the beta' subunit thereby facilitating its interaction with the beta and alpha subunits. The polypeptide is DNA-directed RNA polymerase subunit omega (Maridesulfovibrio salexigens (strain ATCC 14822 / DSM 2638 / NCIMB 8403 / VKM B-1763) (Desulfovibrio salexigens)).